Reading from the N-terminus, the 212-residue chain is Large ribosomal subunit protein uL3 (212 aa).

Q153 carries the N5-methylglutamine modification.

Belongs to the universal ribosomal protein uL3 family. As to quaternary structure, part of the 50S ribosomal subunit. Forms a cluster with proteins L14 and L19. Post-translationally, methylated by PrmB.

Its function is as follows. One of the primary rRNA binding proteins, it binds directly near the 3'-end of the 23S rRNA, where it nucleates assembly of the 50S subunit. The chain is Large ribosomal subunit protein uL3 from Shewanella piezotolerans (strain WP3 / JCM 13877).